A 122-amino-acid polypeptide reads, in one-letter code: UPF0102 protein RHE_CH00320 (122 aa).

This sequence belongs to the UPF0102 family.

The sequence is that of UPF0102 protein RHE_CH00320 from Rhizobium etli (strain ATCC 51251 / DSM 11541 / JCM 21823 / NBRC 15573 / CFN 42).